The primary structure comprises 104 residues: Large ribosomal subunit protein uL24 (104 aa).

This sequence belongs to the universal ribosomal protein uL24 family. Part of the 50S ribosomal subunit.

Functionally, one of two assembly initiator proteins, it binds directly to the 5'-end of the 23S rRNA, where it nucleates assembly of the 50S subunit. One of the proteins that surrounds the polypeptide exit tunnel on the outside of the subunit. The chain is Large ribosomal subunit protein uL24 from Shewanella denitrificans (strain OS217 / ATCC BAA-1090 / DSM 15013).